A 186-amino-acid polypeptide reads, in one-letter code: Peptide deformylase 2 (186 aa).

Fe cation is bound by residues Cys104 and His146. Glu147 is an active-site residue. Residue His150 coordinates Fe cation.

It belongs to the polypeptide deformylase family. Requires Fe(2+) as cofactor.

The catalysed reaction is N-terminal N-formyl-L-methionyl-[peptide] + H2O = N-terminal L-methionyl-[peptide] + formate. Its function is as follows. Removes the formyl group from the N-terminal Met of newly synthesized proteins. Requires at least a dipeptide for an efficient rate of reaction. N-terminal L-methionine is a prerequisite for activity but the enzyme has broad specificity at other positions. The polypeptide is Peptide deformylase 2 (Streptomyces avermitilis (strain ATCC 31267 / DSM 46492 / JCM 5070 / NBRC 14893 / NCIMB 12804 / NRRL 8165 / MA-4680)).